Consider the following 443-residue polypeptide: Threonine/serine transporter TdcC (443 aa).

Helical transmembrane passes span 22–42, 44–64, 97–117, 135–155, 163–183, 207–227, 259–279, 319–339, 366–386, 389–409, and 422–442; these read TTWTLGLFGTAIGAGVLFFPI, AGFGGLIPILVMLVLAYPIAF, GVVITFLYFFAICPLLWIYGV, ALNRGFVALFLLLLMAVIIWF, VMSFLVWPFIASLVLISLSLI, ILVTVWLGISIMVFSFNFSPI, ASILMVAVVMFFAFSCLFALS, ASIIALVAIFKSFFGHYLGTL, LSMVFIMGSTWLVAYVNPNIL, IEAMGAPIIASLLCLLPMYAI, and IDNVFVTAIGLLTISNIVYKV.

It belongs to the amino acid/polyamine transporter 2 family. SdaC/TdcC subfamily.

The protein resides in the cell inner membrane. The enzyme catalyses L-threonine(in) + H(+)(in) = L-threonine(out) + H(+)(out). It catalyses the reaction L-serine(in) + H(+)(in) = L-serine(out) + H(+)(out). Its function is as follows. Involved in the import of threonine and serine into the cell, with the concomitant import of a proton (symport system). This Escherichia fergusonii (strain ATCC 35469 / DSM 13698 / CCUG 18766 / IAM 14443 / JCM 21226 / LMG 7866 / NBRC 102419 / NCTC 12128 / CDC 0568-73) protein is Threonine/serine transporter TdcC.